Consider the following 347-residue polypeptide: CCN family member 2 (347 aa).

Positions Met-1 to Gly-24 are cleaved as a signal peptide. The IGFBP N-terminal domain maps to Gln-25–Lys-96. 6 disulfide bridges follow: Cys-27-Cys-52, Cys-31-Cys-54, Cys-33-Cys-55, Cys-41-Cys-58, Cys-66-Cys-80, and Cys-72-Cys-93. The VWFC domain maps to Ala-99–Asp-165. One can recognise a TSP type-1 domain in the interval Asn-196 to Glu-241. Residues Glu-245 to Ala-347 are heparin-binding. Cystine bridges form between Cys-254-Cys-291, Cys-271-Cys-305, Cys-282-Cys-321, Cys-285-Cys-323, and Cys-290-Cys-327. In terms of domain architecture, CTCK spans Cys-254–Pro-328.

It belongs to the CCN family. As to quaternary structure, monomer. Interacts with TSKU.

It is found in the secreted. Its subcellular location is the extracellular space. The protein localises to the extracellular matrix. Functionally, major connective tissue mitoattractant secreted by vascular endothelial cells. Promotes proliferation and differentiation of chondrocytes. Is involved in the stimulation of osteoblast differentiation and has a critical role in osteogenesis. Mediates heparin- and divalent cation-dependent cell adhesion in many cell types including fibroblasts, myofibroblasts, endothelial and epithelial cells. Enhances fibroblast growth factor-induced DNA synthesis. This is CCN family member 2 from Rattus norvegicus (Rat).